The primary structure comprises 3263 residues: Protein unc-80 (3263 aa).

Disordered stretches follow at residues 491 to 527 (KSAL…LDEG), 627 to 666 (NDTE…SNPS), 939 to 1010 (PTTS…DDGV), 1042 to 1076 (DEEI…QVKA), 1380 to 1475 (SRQS…RMRA), 1633 to 1660 (LRKQ…RESA), and 1680 to 1721 (MQQE…LPEK). Basic and acidic residues predominate over residues 499–508 (NENRRTDHQR). Polar residues predominate over residues 509–519 (MPSTQKSVSGS). Residues 644 to 658 (TTNSRRSSLNTLSRR) are compositionally biased toward low complexity. 2 stretches are compositionally biased toward polar residues: residues 956–967 (GAQSQKQSNDQA) and 981–1005 (SGGT…TVSS). Positions 1042–1055 (DEEISDNENEEGTS) are enriched in acidic residues. Residues 1393–1402 (QGSTKSTTYV) show a composition bias toward polar residues. Over residues 1435 to 1447 (HKRKSFRNRKQSK) the composition is skewed to basic residues. Polar residues-rich tracts occupy residues 1460–1469 (GSLTSQQSPI) and 1633–1653 (LRKQ…QSTA). Over residues 1680 to 1710 (MQQEKEKEKEKEKEEKDALKKQSVEQDHSST) the composition is skewed to basic and acidic residues. 5 helical membrane-spanning segments follow: residues 2088–2108 (AIGM…GLYF), 2318–2338 (AFMF…MIMH), 2352–2372 (YISI…FLIM), 2953–2973 (AIYL…APMW), and 2995–3015 (AFVD…LPMI). Disordered regions lie at residues 3078 to 3166 (YTPT…RTRS) and 3178 to 3198 (RKSR…SVEL). The segment covering 3124 to 3135 (IPEDPEDSEDVI) has biased composition (acidic residues). Over residues 3138 to 3166 (NSTGQVTSRISKSPSIPLNKTHQSSRTRS) the composition is skewed to polar residues.

This sequence belongs to the unc-80 family. As to expression, expressed in the nervous system. Expressed in both acetylcholine and GABA motor neurons.

It localises to the membrane. Probable component of the nca-1 sodium channel complex, a cation channel that regulates neuronal activity by transmitting depolarization signals to synapses. Regulates the transition from slow to rapid forms of locomotion. Required for localization of nca-1 along axons and in non-synaptic regions. Contributes to endocytosis defects in synaptojanin mutants. Involved in the control of anasthetic response to halothane. This Caenorhabditis elegans protein is Protein unc-80 (unc-80).